We begin with the raw amino-acid sequence, 557 residues long: Tektin-5 (557 aa).

Residues 302–386 (DNIRHAQNMR…LLERAIVAKE (85 aa)) are a coiled coil. 6 repeat units span residues 507-512 (CSGSAL), 513-518 (CKGPAS), 519-524 (CGGGAS), 525-530 (CGGGAS), 531-536 (CGGHAP), and 537-541 (CGSAL). The 6 X 6 AA approximate tandem repeats of C-[GSK]-G-[GSPH]-A-[SLP] stretch occupies residues 507-541 (CSGSALCKGPASCGGGASCGGGASCGGHAPCGSAL).

It belongs to the tektin family. As to quaternary structure, microtubule inner protein component of sperm flagellar doublet microtubules. Interacts with TEKT3. In terms of processing, ubiquitinated, leading to its degradation. Deubiquitinated by USP16, promoting its stability. Strongly expressed in germ cells of the testis (at protein level). Expressed in spermatozoa. Also detected in brain.

The protein localises to the cytoplasm. It localises to the cytoskeleton. It is found in the flagellum axoneme. Its function is as follows. Sperm-specific microtubule inner protein (MIP) part of the dynein-decorated doublet microtubules (DMTs) in flagellar axoneme. Forms an extensive interaction network in different conformations that reinforces the helix bundle composed by other tektin proteins (TEKT1 to TEKT4) and MIPs to anchor the tektin bundle onto the tubulin wall of A-tubule of the sperm flagellum. The chain is Tektin-5 from Mus musculus (Mouse).